We begin with the raw amino-acid sequence, 251 residues long: MNFLDLPEECIATMISFTSPFDACRISAVSKLLRSAADSNTTWERFLPSDYRMYIDNSLSRFSNKQLFLRFCESPLLIEDGRTSFWMEKRSGKKCWMLSARKLDIVWVDSPEFWIWVSIPDSRFEEVAGLLMVCWFEIRGKISTSLLSKATNYSAYLVFKEQEMGSFGFESLPLEVSFRSTRTEVYNNRRVFLKSGTQESREDGWLEIELGEYYVGFDDEEIEMSVLETREGGWKGGIIVQGIEIRPKELL.

The region spanning 1 to 46 (MNFLDLPEECIATMISFTSPFDACRISAVSKLLRSAADSNTTWERF) is the F-box domain.

The protein is Putative F-box protein PP2-B12 (PP2B12) of Arabidopsis thaliana (Mouse-ear cress).